The following is a 658-amino-acid chain: Putative endo-beta-N-acetylglucosaminidase (658 aa).

The N-terminal stretch at 1–23 (MKKVRFIFLALLFFLASPEGAMA) is a signal peptide. 13 Cell wall-binding repeats span residues 42–63 (ANEW…DANY), 65–84 (ENEW…GGYM), 86–105 (KSEW…DGKM), 124–145 (IEDW…DGQH), 147–166 (EKEW…GGYL), 185–206 (QQGW…NGNY), 208–227 (DKEW…GGYM), 229–248 (ANEW…DGKM), 250–271 (EKEW…GGYM), 273–292 (ANEW…DGKI), 294–315 (EKEW…GGYM), 317–336 (ANEW…DGKI), and 338–359 (EKEW…GGYM).

This sequence belongs to the glycosyl hydrolase 73 family.

Its subcellular location is the secreted. The catalysed reaction is an N(4)-(oligosaccharide-(1-&gt;3)-[oligosaccharide-(1-&gt;6)]-beta-D-Man-(1-&gt;4)-beta-D-GlcNAc-(1-&gt;4)-alpha-D-GlcNAc)-L-asparaginyl-[protein] + H2O = an oligosaccharide-(1-&gt;3)-[oligosaccharide-(1-&gt;6)]-beta-D-Man-(1-&gt;4)-D-GlcNAc + N(4)-(N-acetyl-beta-D-glucosaminyl)-L-asparaginyl-[protein]. In terms of biological role, plays an important role in cell wall degradation and cell separation. This chain is Putative endo-beta-N-acetylglucosaminidase (lytB), found in Streptococcus pneumoniae serotype 4 (strain ATCC BAA-334 / TIGR4).